The chain runs to 389 residues: Succinate--CoA ligase [ADP-forming] subunit beta (389 aa).

The ATP-grasp domain maps to 9 to 244 (KELLRQFNVP…IDEEDAAEIE (236 aa)). ATP contacts are provided by residues lysine 46, 53–55 (GRG), glutamate 99, alanine 102, and glutamate 107. The Mg(2+) site is built by asparagine 199 and aspartate 213. Residues asparagine 264 and 321 to 323 (GIM) contribute to the substrate site.

Belongs to the succinate/malate CoA ligase beta subunit family. In terms of assembly, heterotetramer of two alpha and two beta subunits. It depends on Mg(2+) as a cofactor.

The catalysed reaction is succinate + ATP + CoA = succinyl-CoA + ADP + phosphate. It catalyses the reaction GTP + succinate + CoA = succinyl-CoA + GDP + phosphate. It participates in carbohydrate metabolism; tricarboxylic acid cycle; succinate from succinyl-CoA (ligase route): step 1/1. Functionally, succinyl-CoA synthetase functions in the citric acid cycle (TCA), coupling the hydrolysis of succinyl-CoA to the synthesis of either ATP or GTP and thus represents the only step of substrate-level phosphorylation in the TCA. The beta subunit provides nucleotide specificity of the enzyme and binds the substrate succinate, while the binding sites for coenzyme A and phosphate are found in the alpha subunit. This chain is Succinate--CoA ligase [ADP-forming] subunit beta, found in Polynucleobacter necessarius subsp. necessarius (strain STIR1).